The primary structure comprises 253 residues: Ubiquinone/menaquinone biosynthesis C-methyltransferase UbiE (253 aa).

Residues Thr76, Asp97, 125–126 (NA), and Ser142 contribute to the S-adenosyl-L-methionine site.

It belongs to the class I-like SAM-binding methyltransferase superfamily. MenG/UbiE family.

The catalysed reaction is a 2-demethylmenaquinol + S-adenosyl-L-methionine = a menaquinol + S-adenosyl-L-homocysteine + H(+). It catalyses the reaction a 2-methoxy-6-(all-trans-polyprenyl)benzene-1,4-diol + S-adenosyl-L-methionine = a 5-methoxy-2-methyl-3-(all-trans-polyprenyl)benzene-1,4-diol + S-adenosyl-L-homocysteine + H(+). It functions in the pathway quinol/quinone metabolism; menaquinone biosynthesis; menaquinol from 1,4-dihydroxy-2-naphthoate: step 2/2. Its pathway is cofactor biosynthesis; ubiquinone biosynthesis. In terms of biological role, methyltransferase required for the conversion of demethylmenaquinol (DMKH2) to menaquinol (MKH2) and the conversion of 2-polyprenyl-6-methoxy-1,4-benzoquinol (DDMQH2) to 2-polyprenyl-3-methyl-6-methoxy-1,4-benzoquinol (DMQH2). In Xanthomonas campestris pv. campestris (strain ATCC 33913 / DSM 3586 / NCPPB 528 / LMG 568 / P 25), this protein is Ubiquinone/menaquinone biosynthesis C-methyltransferase UbiE.